The chain runs to 127 residues: Holo-[acyl-carrier-protein] synthase (127 aa).

Mg(2+)-binding residues include Asp-9 and Glu-58.

Belongs to the P-Pant transferase superfamily. AcpS family. Mg(2+) is required as a cofactor.

Its subcellular location is the cytoplasm. The catalysed reaction is apo-[ACP] + CoA = holo-[ACP] + adenosine 3',5'-bisphosphate + H(+). Its function is as follows. Transfers the 4'-phosphopantetheine moiety from coenzyme A to a Ser of acyl-carrier-protein. The polypeptide is Holo-[acyl-carrier-protein] synthase (Shewanella sp. (strain W3-18-1)).